A 246-amino-acid polypeptide reads, in one-letter code: Purine nucleoside phosphorylase ORF3 (246 aa).

Positions 71, 110, and 127 each coordinate Zn(2+).

The protein belongs to the purine nucleoside phosphorylase YfiH/LACC1 family. Homodimer. It depends on Cu(2+) as a cofactor. Requires Zn(2+) as cofactor.

It carries out the reaction adenosine + phosphate = alpha-D-ribose 1-phosphate + adenine. The enzyme catalyses S-methyl-5'-thioadenosine + phosphate = 5-(methylsulfanyl)-alpha-D-ribose 1-phosphate + adenine. It catalyses the reaction inosine + phosphate = alpha-D-ribose 1-phosphate + hypoxanthine. The catalysed reaction is adenosine + H2O + H(+) = inosine + NH4(+). Its function is as follows. Purine nucleoside enzyme that catalyzes the phosphorolysis of adenosine and inosine nucleosides, yielding D-ribose 1-phosphate and the respective free bases, adenine and hypoxanthine. Also catalyzes the phosphorolysis of S-methyl-5'-thioadenosine into adenine and S-methyl-5-thio-alpha-D-ribose 1-phosphate. Also has adenosine deaminase activity. In Streptomyces griseus, this protein is Purine nucleoside phosphorylase ORF3.